Here is a 127-residue protein sequence, read N- to C-terminus: Ribonuclease VapC6 (127 aa).

The 95-residue stretch at 26–120 (EPQRAEFCRS…ERHLPDIRVR (95 aa)) folds into the PINc domain. Residue Asp-86 participates in Mg(2+) binding.

The protein belongs to the PINc/VapC protein family. The cofactor is Mg(2+).

Toxic component of a type II toxin-antitoxin (TA) system. An RNase. The cognate antitoxin is VapB6. The sequence is that of Ribonuclease VapC6 from Mycobacterium tuberculosis (strain CDC 1551 / Oshkosh).